Here is a 158-residue protein sequence, read N- to C-terminus: MKIFIQNQQDKVDIDQHISKIIEESIVNTIKVFLEEENFEISVLIVDNSFIKELNRNYRNVNKETDVLSFPIFEFKNGKLLEDIVIMEDEIPLGDIVISIEKAAQQAKEFGHSLEREIAYLTVHSVLHLLGFDHIEEDDRKVMREYEEQILQSMGLTR.

Zn(2+) is bound by residues His124, His128, and His134.

Belongs to the endoribonuclease YbeY family. It depends on Zn(2+) as a cofactor.

It localises to the cytoplasm. Functionally, single strand-specific metallo-endoribonuclease involved in late-stage 70S ribosome quality control and in maturation of the 3' terminus of the 16S rRNA. The protein is Endoribonuclease YbeY of Caldicellulosiruptor bescii (strain ATCC BAA-1888 / DSM 6725 / KCTC 15123 / Z-1320) (Anaerocellum thermophilum).